Reading from the N-terminus, the 808-residue chain is Phosphoinositide phosphatase SAC2 (808 aa).

The region spanning 158–551 is the SAC domain; the sequence is LCTVDLTKDF…GDTLALQYGG (394 aa). The segment at 429–476 is disordered; sequence FQNQNPSTLENDDGECSTYDPPSKDETAPNLVVENGNDSKDAKEDQQK. Residues 465-476 show a composition bias toward basic and acidic residues; the sequence is NDSKDAKEDQQK. Positions 487–498 match the Phosphatase catalytic core motif; the sequence is RTNCIDCLDRTN.

Component of the PI(3,5)P2 regulatory complex at least composed of ATG18, SAC/FIG4, FAB1 and VAC14. It depends on Mg(2+) as a cofactor. Ubiquitous with a higher level of expression in young seedlings than in other tissues.

Its subcellular location is the vacuole membrane. It catalyses the reaction a 1,2-diacyl-sn-glycero-3-phospho-(1D-myo-inositol-3,5-bisphosphate) + H2O = a 1,2-diacyl-sn-glycero-3-phospho-(1D-myo-inositol-3-phosphate) + phosphate. Its function is as follows. The PI(3,5)P2 regulatory complex regulates both the synthesis and turnover of phosphatidylinositol 3,5-bisphosphate (PtdIns(3,5)P2). The chain is Phosphoinositide phosphatase SAC2 (SAC2) from Arabidopsis thaliana (Mouse-ear cress).